Here is a 140-residue protein sequence, read N- to C-terminus: Tumor protein D55 (140 aa).

The segment at Met1–Glu28 is disordered. Polar residues predominate over residues Glu7–Thr18. The stretch at Glu28–Cys57 forms a coiled coil.

The protein belongs to the TPD52 family. In terms of assembly, interacts with TPD52L2. Specifically expressed in testis. Expressed at 5.6-fold higher levels in adult testis than in fetal testis.

This Homo sapiens (Human) protein is Tumor protein D55 (TPD52L3).